The chain runs to 3371 residues: Abnormal spindle-like microcephaly-associated protein homolog (3371 aa).

5 positions are modified to phosphoserine: serine 212, serine 215, serine 300, serine 325, and serine 540. The interval 536–559 (RPHFSPVESKTSTVKHTKKVVTSS) is disordered. The region spanning 852-988 (KASKEILLAF…LLWKIALAFQ (137 aa)) is the Calponin-homology (CH) 1 domain. Residues 989-1014 (VDISLNLDQLKEEIDFLKNTQSMKKT) adopt a coiled-coil conformation. At serine 1035 the chain carries Phosphoserine. Residues 1042 to 1193 (SESVKLLMDW…YLSFLCARLL (152 aa)) form the Calponin-homology (CH) 2 domain. IQ domains are found at residues 1198–1227 (ETRA…RDKA), 1396–1427 (EERA…IIIQ), 1469–1500 (KRAA…VLQS), 1564–1593 (TRSA…SIVK), 1587–1616 (ILTS…ATVK), 1610–1639 (LKKA…IAQQ), 1644–1673 (RRAS…AAVS), 1667–1698 (QRKA…VVIQ), 1717–1746 (VRRA…AALK), 1740–1769 (QSAA…SALK), 1790–1819 (TRTA…AAVK), 1813–1844 (EHEA…SVIQ), 1863–1894 (LRRA…IIIQ), 1886–1917 (QQRC…HLIQ), 1936–1965 (TKXA…AAAT), 1959–1990 (MHQA…VIIQ), 2009–2040 (VKKA…TLIK), 2032–2063 (MHMA…IIIQ), 2082–2113 (ILKA…TLIQ), 2105–2134 (MRTA…VTKT), 2155–2186 (LRRS…AVIQ), 2227–2258 (LQKA…TVLQ), 2250–2281 (MRRA…QVIQ), 2300–2331 (QRHS…TLIQ), 2323–2354 (MHAS…VFVQ), 2396–2427 (MHRA…VLIQ), 2446–2477 (WRHS…VIIQ), 2539–2570 (RHQA…VFVQ), 2580–2609 (RTQA…AATR), 2603–2634 (MHLA…VVIQ), 2653–2682 (IQKS…KKMA), 2729–2760 (QRKA…RIQS), 2751–2780 (QRRA…AALT), 2824–2853 (IRSS…STIK), 2847–2878 (LKDS…RIQA), 2869–2900 (EVKA…RIIQ), 2944–2973 (RHQA…AALT), 2994–3025 (LKKS…RLLH), 3096–3125 (HSRA…RIAK), and 3119–3150 (FNKR…IRQR).

It is found in the cytoplasm. It localises to the cytoskeleton. Its subcellular location is the spindle. The protein localises to the nucleus. Functionally, probable role in mitotic spindle regulation and coordination of mitotic processes. May have a preferential role in regulating neurogenesis. In Bos taurus (Bovine), this protein is Abnormal spindle-like microcephaly-associated protein homolog (ASPM).